Consider the following 684-residue polypeptide: TBC1 domain family member 23 (684 aa).

In terms of domain architecture, Rab-GAP TBC spans 44-225 (PLPADLRAKV…AIWDGYLQQA (182 aa)). Residue serine 300 is modified to Phosphoserine. The region spanning 334–446 (EGVRFFVVDC…LQQHLADINV (113 aa)) is the Rhodanese domain. Residues 459 to 479 (STSGSRSSINSVDGESPNGSS) show a composition bias toward polar residues. Residues 459-482 (STSGSRSSINSVDGESPNGSSDRG) form a disordered region. 3 positions are modified to phosphoserine: serine 469, serine 474, and serine 507. Threonine 514 bears the Phosphothreonine mark. Residues 514–558 (TPVDRHVSSSDRVGKPYRGVKPVFSIGDEEEYDTDEIDSSSMSDD) form a may mediate the interaction with C17orf75, FAM91A1 and WDR11 region. The tract at residues 514–684 (TPVDRHVSSS…IMKVLDALES (171 aa)) is may mediate the interaction with WASHC1. Serine 556 is modified (phosphoserine). Residues 559-684 (DRKEVVNIQT…IMKVLDALES (126 aa)) are may mediate the interaction with FKBP15 and WASHC2; required for endosome to Golgi trafficking.

Directly interacts with GOLGA1 and GOLGA4. Interacts with FAM91A1, C17ORF75 and WDR11; the interaction recruits TBC1D23 to AP-1-derived vesicles. Directly interacts with WASHC1 and WASHC2A/FAM21A. Interacts with FKBP15.

It is found in the golgi apparatus. The protein localises to the trans-Golgi network. Its subcellular location is the cytoplasmic vesicle. Its function is as follows. Putative Rab GTPase-activating protein which plays a role in vesicular trafficking. Involved in endosome-to-Golgi trafficking. Acts as a bridging protein by binding simultaneously to golgins, including GOLGA1 and GOLGA4, located at the trans-Golgi, and to the WASH complex, located on endosome-derived vesicles. Together with WDR11 complex facilitates the golgin-mediated capture of vesicles generated using AP-1. Plays a role in brain development, including in cortical neuron positioning. May also be important for neurite outgrowth, possibly through its involvement in membrane trafficking and cargo delivery, 2 processes that are essential for axonal and dendritic growth. May act as a general inhibitor of innate immunity signaling, strongly inhibiting multiple TLR and dectin/CLEC7A-signaling pathways. Does not alter initial activation events, but instead affects maintenance of inflammatory gene expression several hours after bacterial lipopolysaccharide (LPS) challenge. The chain is TBC1 domain family member 23 (TBC1D23) from Pongo abelii (Sumatran orangutan).